A 415-amino-acid chain; its full sequence is F-box protein ETP1 (415 aa).

The 46-residue stretch at 1-46 folds into the F-box domain; that stretch reads MTIPDLCNDLVDEILCRVPARNLKRLRSTSKRWNRLFKDDRRFARE.

As to quaternary structure, interacts with EIN2 (via C-terminus).

In terms of biological role, negative regulator of EIN2 protein stability. The chain is F-box protein ETP1 from Arabidopsis thaliana (Mouse-ear cress).